The following is an 802-amino-acid chain: Epithelial sodium channel subunit delta (802 aa).

At 1 to 250 (MRAVLSQKTT…CSRGNRLKTT (250 aa)) the chain is on the cytoplasmic side. A disordered region spans residues 145-211 (KQPHGGALTS…PPPPKEGHQE (67 aa)). The segment covering 166-176 (CHLKGWQHRPT) has biased composition (basic residues). Residues 192 to 205 (PPRPGPPSAPPPPP) show a composition bias toward pro residues. A helical transmembrane segment spans residues 251 to 271 (SWGLLSLGALVALCWQLGLLF). The Extracellular portion of the chain corresponds to 272–694 (ERHWHRPVLM…VPQLLSAMGS (423 aa)). 2 N-linked (GlcNAc...) asparagine glycosylation sites follow: Asn330 and Asn548. A helical transmembrane segment spans residues 695-715 (LCSLWFGASVLSLLELLELLL). The Cytoplasmic portion of the chain corresponds to 716–802 (DASALTLVLG…GPQPLETLDT (87 aa)). Positions 738–777 (RASPASGASSIKPEASQMPPPAGGTSDDPEPSGPHLPRVM) are disordered.

The protein belongs to the amiloride-sensitive sodium channel (TC 1.A.6) family. SCNN1D subfamily. Can form an alternative heterotrimeric epithelial sodium channel (ENaC), composed of a delta (SCNN1D), beta (SCNN1B), and gamma (SCNN1G) subunit, where the delta (SCNN1D) subunit replaces the alpha (SCNN1A) subunit. As to expression, not specifically expressed in epithelial cells.

Its subcellular location is the apical cell membrane. It catalyses the reaction Na(+)(in) = Na(+)(out). With respect to regulation, originally identified and characterized by its inhibition by the diuretic drug amiloride. Potential alternative pore-forming subunit of the epithelial sodium channel (ENaC), capable of replacing the alpha/SCNN1A subunit, creating a more active channel with distinct properties. ENaC functions in epithelial tissues, where it facilitates the electrodiffusion of sodium ions from the extracellular fluid through the apical membrane of cells, with water following osmotically, regulating sodium balance and fluid homeostasis. This subunit could also function independently as a sodium channel or assemble into other tissue-specific heterotrimeric sodium channels. In terms of biological role, ENaC channels including this isoform exhibit greater conductance. This chain is Epithelial sodium channel subunit delta, found in Homo sapiens (Human).